The chain runs to 361 residues: 3-dehydroquinate synthase (361 aa).

Residues 73-78 (DAEAGK), 107-111 (GAATD), 131-132 (TT), K144, K153, and 171-174 (TLET) contribute to the NAD(+) site. Residues E186, H249, and H265 each contribute to the Zn(2+) site.

The protein belongs to the sugar phosphate cyclases superfamily. Dehydroquinate synthase family. NAD(+) serves as cofactor. The cofactor is Co(2+). Requires Zn(2+) as cofactor.

Its subcellular location is the cytoplasm. It carries out the reaction 7-phospho-2-dehydro-3-deoxy-D-arabino-heptonate = 3-dehydroquinate + phosphate. It functions in the pathway metabolic intermediate biosynthesis; chorismate biosynthesis; chorismate from D-erythrose 4-phosphate and phosphoenolpyruvate: step 2/7. In terms of biological role, catalyzes the conversion of 3-deoxy-D-arabino-heptulosonate 7-phosphate (DAHP) to dehydroquinate (DHQ). The sequence is that of 3-dehydroquinate synthase from Mycobacterium leprae (strain TN).